A 238-amino-acid polypeptide reads, in one-letter code: Laccase-S (238 aa).

2 consecutive Plastocyanin-like domains span residues 4 to 87 and 100 to 238; these read NVIA…YDPA and HTII…IARY. A glycan (N-linked (GlcNAc...) asparagine) is linked at asparagine 8. The Cu cation site is built by histidine 21, histidine 23, histidine 66, and histidine 68. The cysteines at positions 74 and 162 are disulfide-linked. Asparagine 165 carries an N-linked (GlcNAc...) asparagine glycan.

It belongs to the multicopper oxidase family. Monomer. Cu cation serves as cofactor.

It localises to the secreted. The enzyme catalyses 4 hydroquinone + O2 = 4 benzosemiquinone + 2 H2O. Its activity is regulated as follows. Activity is strongly promoted by toluene. Activity is promoted by magnesium, potassium, cadmium, zinc, nickel, sodium, lead and manganese ions. Completely inhibited by IAA (cysteine protease inhibitor), PMSF (serine protease inhibitor), DEP (histidine protease inhibitor) and NAI (tyrosine protease inhibitor). Inhibited by ethanol, acetone, SDS, and EDTA. Activity is strongly inhibited by mercury ions. Also inhibited by lithium, aluminum, calcium, barium and iron ions. Lignin degradation and detoxification of lignin-derived products. Has activity towards 2,2'-azino-bis(3-ethylbenzothiazoline-6-sulfonic acid) (ABTS). The polypeptide is Laccase-S (Trametes hirsuta (White-rot fungus)).